The following is a 306-amino-acid chain: Ribonuclease BN (306 aa).

Residues histidine 64, histidine 66, aspartate 68, histidine 69, histidine 141, aspartate 212, and histidine 270 each coordinate Zn(2+). The active-site Proton acceptor is aspartate 68.

It belongs to the RNase Z family. RNase BN subfamily. In terms of assembly, homodimer. The cofactor is Zn(2+).

Zinc phosphodiesterase, which has both exoribonuclease and endoribonuclease activities. In Klebsiella pneumoniae subsp. pneumoniae (strain ATCC 700721 / MGH 78578), this protein is Ribonuclease BN.